The primary structure comprises 284 residues: UDP-N-acetylenolpyruvoylglucosamine reductase (284 aa).

One can recognise an FAD-binding PCMH-type domain in the interval 21 to 180 (KIGGPARLFV…LKAAFKLKKA (160 aa)). Residue arginine 159 is part of the active site. The active-site Proton donor is the serine 209. Glutamate 280 is an active-site residue.

This sequence belongs to the MurB family. The cofactor is FAD.

The protein resides in the cytoplasm. The enzyme catalyses UDP-N-acetyl-alpha-D-muramate + NADP(+) = UDP-N-acetyl-3-O-(1-carboxyvinyl)-alpha-D-glucosamine + NADPH + H(+). It functions in the pathway cell wall biogenesis; peptidoglycan biosynthesis. Its function is as follows. Cell wall formation. This chain is UDP-N-acetylenolpyruvoylglucosamine reductase, found in Pseudothermotoga lettingae (strain ATCC BAA-301 / DSM 14385 / NBRC 107922 / TMO) (Thermotoga lettingae).